We begin with the raw amino-acid sequence, 141 residues long: Neuropeptides CP2 (141 aa).

The first 26 residues, 1–26 (MDSRICTSFARLMASALCVSTLLVTA), serve as a signal peptide directing secretion. A disordered region spans residues 75–94 (KVDMPLPRQRTSSRSSERWA). Position 140 is a histidine amide (histidine 140).

Neurons.

The protein localises to the secreted. Functionally, mediates intrinsic neuromodulation. This is Neuropeptides CP2 (CP2PP) from Aplysia californica (California sea hare).